Here is a 403-residue protein sequence, read N- to C-terminus: MLTPEQKAIVKATVPALEAHGETITRTFYASMFAAHPELLNIFNPANQQTGKQARSLAASVLAYAAHIDHPEALGGMVGRIAHKHVSLEVLPEHYPIVGQYLLGAIAGVLGDAAKPEILDAWAAAYGELADLMIGIEKGMYDAGAGQPGGWRDFRPFRVARKVAESRVITSFVLEPVGGGALPAYQPGQYLSLKVKVPGQERWQIRQYSLSDAPSPDHYRISVKREGGGLVSEYLHGAVQEGDELLVHVPAGDFVLQQSERPVVLISAGVGITPMLAMVQTLAQAGSQRPVTFIHAAQNGSVHAFRDDVARLTHEYPHFRKVVFYDEAGPDDQLGTHHDVAGRLSLDAVRGALPAGEAEFYYCGPAGFAGAVEAILDDLQVPAERRFTETFGPSQSFAPVILG.

Positions 1–138 (MLTPEQKAIV…LADLMIGIEK (138 aa)) constitute a Globin domain. Position 85 (His85) interacts with heme b. Catalysis depends on charge relay system residues Tyr95 and Glu137. The tract at residues 149–403 (GGWRDFRPFR…SQSFAPVILG (255 aa)) is reductase. The 106-residue stretch at 152 to 257 (RDFRPFRVAR…HVPAGDFVLQ (106 aa)) folds into the FAD-binding FR-type domain. FAD contacts are provided by residues Tyr190 and 206–209 (RQYS). Position 269 to 274 (269 to 274 (GVGITP)) interacts with NADP(+). 390 to 393 (TFGP) is a binding site for FAD.

It belongs to the globin family. Two-domain flavohemoproteins subfamily. This sequence in the C-terminal section; belongs to the flavoprotein pyridine nucleotide cytochrome reductase family. Requires heme b as cofactor. FAD serves as cofactor.

It carries out the reaction 2 nitric oxide + NADPH + 2 O2 = 2 nitrate + NADP(+) + H(+). The enzyme catalyses 2 nitric oxide + NADH + 2 O2 = 2 nitrate + NAD(+) + H(+). The sequence is that of Flavohemoprotein from Deinococcus radiodurans (strain ATCC 13939 / DSM 20539 / JCM 16871 / CCUG 27074 / LMG 4051 / NBRC 15346 / NCIMB 9279 / VKM B-1422 / R1).